Consider the following 383-residue polypeptide: Acetylornithine deacetylase (383 aa).

Residue His-80 coordinates Zn(2+). Residue Asp-82 is part of the active site. Asp-112 contributes to the Zn(2+) binding site. The active site involves Glu-144. Zn(2+) contacts are provided by Glu-145, Glu-169, and His-355.

Belongs to the peptidase M20A family. ArgE subfamily. Homodimer. Zn(2+) is required as a cofactor. It depends on Co(2+) as a cofactor. Requires glutathione as cofactor.

It localises to the cytoplasm. The catalysed reaction is N(2)-acetyl-L-ornithine + H2O = L-ornithine + acetate. Its pathway is amino-acid biosynthesis; L-arginine biosynthesis; L-ornithine from N(2)-acetyl-L-ornithine (linear): step 1/1. Catalyzes the hydrolysis of the amide bond of N(2)-acetylated L-amino acids. Cleaves the acetyl group from N-acetyl-L-ornithine to form L-ornithine, an intermediate in L-arginine biosynthesis pathway, and a branchpoint in the synthesis of polyamines. The chain is Acetylornithine deacetylase from Edwardsiella ictaluri (strain 93-146).